A 147-amino-acid chain; its full sequence is Large ribosomal subunit protein bL9 (147 aa).

Belongs to the bacterial ribosomal protein bL9 family.

In terms of biological role, binds to the 23S rRNA. This chain is Large ribosomal subunit protein bL9, found in Bacteroides fragilis (strain YCH46).